We begin with the raw amino-acid sequence, 213 residues long: Orotate phosphoribosyltransferase (213 aa).

Position 26 (Lys-26) interacts with 5-phospho-alpha-D-ribose 1-diphosphate. Position 34–35 (34–35) interacts with orotate; it reads FF. Residues 72–73, Arg-99, Lys-100, Lys-103, His-105, and 124–132 each bind 5-phospho-alpha-D-ribose 1-diphosphate; these read YK and DDVITAGTA. Orotate is bound by residues Thr-128 and Arg-156.

The protein belongs to the purine/pyrimidine phosphoribosyltransferase family. PyrE subfamily. In terms of assembly, homodimer. The cofactor is Mg(2+).

It catalyses the reaction orotidine 5'-phosphate + diphosphate = orotate + 5-phospho-alpha-D-ribose 1-diphosphate. It functions in the pathway pyrimidine metabolism; UMP biosynthesis via de novo pathway; UMP from orotate: step 1/2. Functionally, catalyzes the transfer of a ribosyl phosphate group from 5-phosphoribose 1-diphosphate to orotate, leading to the formation of orotidine monophosphate (OMP). The protein is Orotate phosphoribosyltransferase of Shigella flexneri.